An 898-amino-acid polypeptide reads, in one-letter code: Endoplasmic reticulum metallopeptidase 1 (898 aa).

At Met1 the chain carries N-acetylmethionine. Residues 1-55 (MEWSSESAAVRRHRGTAERREGEAAASHRQREASAQEDAKGVGRMWGKTENGGGS) form a disordered region. Residues 1–66 (MEWSSESAAV…VAKTALSEAR (66 aa)) are Cytoplasmic-facing. Positions 29–41 (RQREASAQEDAKG) are enriched in basic and acidic residues. Residues 67-87 (TALALALYLLALRALVQLSLQ) traverse the membrane as a helical segment. Residues 88-393 (RLVLSRTSGL…SSSEYRHGSM (306 aa)) are Lumenal-facing. The N-linked (GlcNAc...) asparagine glycan is linked to Asn176. A disulfide bridge links Cys198 with Cys216. 2 residues coordinate Zn(2+): His199 and Asp211. The active-site Proton acceptor is Glu245. Positions 246, 272, and 348 each coordinate Zn(2+). A helical transmembrane segment spans residues 394–414 (VFFDVLGLLVIAYPSRVGSII). Residues 415–451 (NYMVVMAVVLYLGKKLLRPKHRNANYMRDFLCGLGIT) lie on the Cytoplasmic side of the membrane. Residues 452 to 472 (FISWFTSLVTVLIIAVFISLI) traverse the membrane as a helical segment. The Lumenal segment spans residues 473–480 (GQSLSWYN). Residues 481-501 (YFYIAVCLYGTATVAKIIFIH) traverse the membrane as a helical segment. Residues 502 to 515 (TLAKRFYYMNASDL) lie on the Cytoplasmic side of the membrane. The helical transmembrane segment at 516-538 (YLGELFFDTSLFVHCAFLVALTY) threads the bilayer. The Lumenal portion of the chain corresponds to 539–542 (QGFC). A helical transmembrane segment spans residues 543–562 (SAFMSAVWVVFPLLTKLCVY). Residues 563 to 573 (KDFKKHGAQGR) are Cytoplasmic-facing. A helical transmembrane segment spans residues 574-594 (FVALYLLGMFIPYLYGLYLIW). At 595-615 (AVFEMFTPILGRSGSEIPPDV) the chain is on the lumenal side. The chain crosses the membrane as a helical span at residues 616-636 (VLASILAVCVMILSSYFITFI). Residues 637-645 (YLVNSTKKT) are Cytoplasmic-facing. The chain crosses the membrane as a helical span at residues 646–666 (ILTLILVCAVTFLLVCSGAFF). Topologically, residues 667–898 (PYSSNPESPK…WVSTYSLFVF (232 aa)) are lumenal. The N-linked (GlcNAc...) asparagine glycan is linked to Asn724.

It belongs to the peptidase M28 family. It depends on Zn(2+) as a cofactor.

The protein resides in the endoplasmic reticulum membrane. Within the ovary, required for the organization of somatic cells and oocytes into discrete follicular structures. This chain is Endoplasmic reticulum metallopeptidase 1, found in Mus musculus (Mouse).